Here is a 311-residue protein sequence, read N- to C-terminus: Formimidoylglutamase (311 aa).

Histidine 130, aspartate 155, histidine 157, aspartate 159, cysteine 242, and aspartate 244 together coordinate Mn(2+).

The protein belongs to the arginase family. The cofactor is Mn(2+).

The enzyme catalyses N-formimidoyl-L-glutamate + H2O = formamide + L-glutamate. It participates in amino-acid degradation; L-histidine degradation into L-glutamate; L-glutamate from N-formimidoyl-L-glutamate (hydrolase route): step 1/1. In terms of biological role, catalyzes the conversion of N-formimidoyl-L-glutamate to L-glutamate and formamide. This is Formimidoylglutamase from Staphylococcus haemolyticus (strain JCSC1435).